Here is a 103-residue protein sequence, read N- to C-terminus: Pyrimidine/purine nucleoside phosphorylase (103 aa).

This sequence belongs to the nucleoside phosphorylase PpnP family.

The enzyme catalyses a purine D-ribonucleoside + phosphate = a purine nucleobase + alpha-D-ribose 1-phosphate. It catalyses the reaction adenosine + phosphate = alpha-D-ribose 1-phosphate + adenine. It carries out the reaction cytidine + phosphate = cytosine + alpha-D-ribose 1-phosphate. The catalysed reaction is guanosine + phosphate = alpha-D-ribose 1-phosphate + guanine. The enzyme catalyses inosine + phosphate = alpha-D-ribose 1-phosphate + hypoxanthine. It catalyses the reaction thymidine + phosphate = 2-deoxy-alpha-D-ribose 1-phosphate + thymine. It carries out the reaction uridine + phosphate = alpha-D-ribose 1-phosphate + uracil. The catalysed reaction is xanthosine + phosphate = alpha-D-ribose 1-phosphate + xanthine. Its function is as follows. Catalyzes the phosphorolysis of diverse nucleosides, yielding D-ribose 1-phosphate and the respective free bases. Can use uridine, adenosine, guanosine, cytidine, thymidine, inosine and xanthosine as substrates. Also catalyzes the reverse reactions. The polypeptide is Pyrimidine/purine nucleoside phosphorylase (Shewanella baltica (strain OS223)).